Reading from the N-terminus, the 717-residue chain is DNA polymerase iota (717 aa).

The interval 1–22 (MEPLHAGAAGSSRAVCSQGPPT) is disordered. A UmuC domain is found at 30–243 (IVHVDLDCFY…NHIKEIPGIG (214 aa)). Residues aspartate 34 and leucine 35 each coordinate Mg(2+). A 2'-deoxyribonucleoside 5'-triphosphate contacts are provided by tyrosine 39 and arginine 71. Aspartate 126 serves as a coordination point for Mg(2+). The active-site Proton acceptor is the glutamate 127. DNA-binding stretches follow at residues 300 to 307 (QSFSEEDT) and 343 to 360 (RLVIRRYSDKHCNRESRQ). The short motif at 500 to 517 (VDQEVFKQLPADIQEEIL) is the Ubiquitin-binding 1 (UBM1) element. 3 disordered regions span residues 549-589 (QMQA…SHPS), 603-622 (KDEQTSQGPTESQGCQFSST), and 644-687 (HRTV…DIDP). Over residues 575–589 (PGTSGLSPGSTSHPS) the composition is skewed to low complexity. Polar residues-rich tracts occupy residues 607-622 (TSQGPTESQGCQFSST) and 652-662 (QTATASHQGLE). The segment covering 665–679 (QGLESRELDSAEEKL) has biased composition (basic and acidic residues). A Ubiquitin-binding 2 (UBM2) motif is present at residues 685–702 (IDPQVFYELPEEVQKELM).

It belongs to the DNA polymerase type-Y family. Interacts with POLH. Interacts with REV1. Interacts with ubiquitin. Mg(2+) serves as cofactor. Mn(2+) is required as a cofactor. Post-translationally, monoubiquitinated. Protein monoubiquitination prevents POLI binding to ubiquitin via the ubiquitin-binding motif 1 and ubiquitin-binding motif 2. Detected in testis, and at very low levels in spleen, lung and brain. Detected in round spermatids, but not in prophase spermatocytes.

The protein resides in the nucleus. It carries out the reaction DNA(n) + a 2'-deoxyribonucleoside 5'-triphosphate = DNA(n+1) + diphosphate. Functionally, error-prone DNA polymerase specifically involved in DNA repair. Plays an important role in translesion synthesis, where the normal high-fidelity DNA polymerases cannot proceed and DNA synthesis stalls. Favors Hoogsteen base-pairing in the active site. Inserts the correct base with high-fidelity opposite an adenosine template. Exhibits low fidelity and efficiency opposite a thymidine template, where it will preferentially insert guanosine. May play a role in hypermutation of immunoglobulin genes. Forms a Schiff base with 5'-deoxyribose phosphate at abasic sites, but may not have lyase activity. The sequence is that of DNA polymerase iota (Poli) from Mus musculus (Mouse).